The sequence spans 308 residues: Aspartate carbamoyltransferase catalytic subunit (308 aa).

Positions 57 and 58 each coordinate carbamoyl phosphate. K86 is an L-aspartate binding site. Residues R107, H135, and Q138 each coordinate carbamoyl phosphate. Positions 168 and 229 each coordinate L-aspartate. Residues L268 and P269 each contribute to the carbamoyl phosphate site.

Belongs to the aspartate/ornithine carbamoyltransferase superfamily. ATCase family. As to quaternary structure, heterooligomer of catalytic and regulatory chains.

It catalyses the reaction carbamoyl phosphate + L-aspartate = N-carbamoyl-L-aspartate + phosphate + H(+). It functions in the pathway pyrimidine metabolism; UMP biosynthesis via de novo pathway; (S)-dihydroorotate from bicarbonate: step 2/3. Catalyzes the condensation of carbamoyl phosphate and aspartate to form carbamoyl aspartate and inorganic phosphate, the committed step in the de novo pyrimidine nucleotide biosynthesis pathway. In Pyrococcus abyssi (strain GE5 / Orsay), this protein is Aspartate carbamoyltransferase catalytic subunit.